The primary structure comprises 451 residues: tRNA modification GTPase MnmE (451 aa).

(6S)-5-formyl-5,6,7,8-tetrahydrofolate contacts are provided by R23, E80, and K119. In terms of domain architecture, TrmE-type G spans 215-372; the sequence is GIKVVLTGQP…LRTVLLKTVG (158 aa). N225 serves as a coordination point for K(+). GTP contacts are provided by residues 225-230, 244-250, and 269-272; these read NVGKSS, TEIPGTT, and DTAG. S229 serves as a coordination point for Mg(2+). K(+)-binding residues include T244, I246, and T249. T250 lines the Mg(2+) pocket. K451 lines the (6S)-5-formyl-5,6,7,8-tetrahydrofolate pocket.

The protein belongs to the TRAFAC class TrmE-Era-EngA-EngB-Septin-like GTPase superfamily. TrmE GTPase family. In terms of assembly, homodimer. Heterotetramer of two MnmE and two MnmG subunits. Requires K(+) as cofactor.

Its subcellular location is the cytoplasm. In terms of biological role, exhibits a very high intrinsic GTPase hydrolysis rate. Involved in the addition of a carboxymethylaminomethyl (cmnm) group at the wobble position (U34) of certain tRNAs, forming tRNA-cmnm(5)s(2)U34. In Nitrosomonas eutropha (strain DSM 101675 / C91 / Nm57), this protein is tRNA modification GTPase MnmE.